We begin with the raw amino-acid sequence, 170 residues long: Cyclic pyranopterin monophosphate synthase (170 aa).

Residues 75-77 (MCH) and 115-116 (ME) contribute to the substrate site. Aspartate 130 is an active-site residue.

The protein belongs to the MoaC family. As to quaternary structure, homohexamer; trimer of dimers.

The catalysed reaction is (8S)-3',8-cyclo-7,8-dihydroguanosine 5'-triphosphate = cyclic pyranopterin phosphate + diphosphate. It functions in the pathway cofactor biosynthesis; molybdopterin biosynthesis. Its function is as follows. Catalyzes the conversion of (8S)-3',8-cyclo-7,8-dihydroguanosine 5'-triphosphate to cyclic pyranopterin monophosphate (cPMP). The sequence is that of Cyclic pyranopterin monophosphate synthase from Bacillus velezensis (strain DSM 23117 / BGSC 10A6 / LMG 26770 / FZB42) (Bacillus amyloliquefaciens subsp. plantarum).